We begin with the raw amino-acid sequence, 446 residues long: Exodeoxyribonuclease 7 large subunit (446 aa).

This sequence belongs to the XseA family. In terms of assembly, heterooligomer composed of large and small subunits.

It is found in the cytoplasm. It catalyses the reaction Exonucleolytic cleavage in either 5'- to 3'- or 3'- to 5'-direction to yield nucleoside 5'-phosphates.. In terms of biological role, bidirectionally degrades single-stranded DNA into large acid-insoluble oligonucleotides, which are then degraded further into small acid-soluble oligonucleotides. The polypeptide is Exodeoxyribonuclease 7 large subunit (Streptococcus pyogenes serotype M6 (strain ATCC BAA-946 / MGAS10394)).